We begin with the raw amino-acid sequence, 141 residues long: Small ribosomal subunit protein uS12 (141 aa).

Residues 118-141 (TGVDKRRQQRSAYGAKRPKADKKK) form a disordered region.

Belongs to the universal ribosomal protein uS12 family. Part of the 30S ribosomal subunit. Contacts proteins S8 and S17. May interact with IF1 in the 30S initiation complex.

In terms of biological role, with S4 and S5 plays an important role in translational accuracy. Interacts with and stabilizes bases of the 16S rRNA that are involved in tRNA selection in the A site and with the mRNA backbone. Located at the interface of the 30S and 50S subunits, it traverses the body of the 30S subunit contacting proteins on the other side and probably holding the rRNA structure together. The combined cluster of proteins S8, S12 and S17 appears to hold together the shoulder and platform of the 30S subunit. This chain is Small ribosomal subunit protein uS12, found in Mycoplasmoides gallisepticum (strain R(low / passage 15 / clone 2)) (Mycoplasma gallisepticum).